Here is a 273-residue protein sequence, read N- to C-terminus: Protein FAM210A (273 aa).

Residues 97–106 (SSSATSSGPP) are compositionally biased toward low complexity. Residues 97-116 (SSSATSSGPPSEKKEDPDPL) are disordered. Residues 107 to 116 (SEKKEDPDPL) are compositionally biased toward basic and acidic residues. The DUF1279 domain maps to 118–230 (DRSISLYQRF…GYMSTPPPVK (113 aa)). A helical transmembrane segment spans residues 137-157 (VLIPVHLITSAVWFGTFYYAA). The stretch at 230–269 (KEYLQDKMEETKELLTEKMEETKDRLTEKLQETKGKVSLK) forms a coiled coil. The interval 247–273 (KMEETKDRLTEKLQETKGKVSLKKKVE) is disordered.

The protein belongs to the FAM210 family. As to quaternary structure, interacts with ATAD3A.

The protein resides in the membrane. It is found in the mitochondrion. Its subcellular location is the cytoplasm. May play a role in the structure and strength of both muscle and bone. This is Protein FAM210A (FAM210A) from Bos taurus (Bovine).